Here is a 562-residue protein sequence, read N- to C-terminus: Adenylate kinase isoenzyme 5 (562 aa).

2 adenylate kinase regions span residues 133-316 (KIIL…MAVD) and 377-559 (KIIF…TAID). Residue 142 to 147 (GSGKGT) coordinates ATP. The segment at 162 to 193 (SVGELLRKKIHSTSSNRKWSLIAKIITTGELA) is NMP 1. Residues R168, 191–193 (ELA), 219–222 (GFPR), and Q226 each bind AMP. Positions 256–266 (KRAEQQGRPDD) are LID 1. R257 is an ATP binding site. AMP contacts are provided by R263 and R274. 386–391 (GSGKGT) lines the ATP pocket. Residues 406 to 435 (STGELLREELASESERSKLIRDIMERGDLV) form an NMP 2 region. AMP contacts are provided by residues T407, R412, 433-435 (DLV), 462-465 (GYPR), and Q469. The LID 2 stretch occupies residues 499–509 (QRSRSSLPVDD). R500 lines the ATP pocket. R517 serves as a coordination point for AMP. G545 contributes to the ATP binding site.

This sequence belongs to the adenylate kinase family. Monomer. Interacts with YWHAZ. In terms of tissue distribution, brain specific.

The protein localises to the cytoplasm. The catalysed reaction is AMP + ATP = 2 ADP. It carries out the reaction a 2'-deoxyribonucleoside 5'-diphosphate + ATP = a 2'-deoxyribonucleoside 5'-triphosphate + ADP. The enzyme catalyses a ribonucleoside 5'-diphosphate + ATP = a ribonucleoside 5'-triphosphate + ADP. Its function is as follows. Nucleoside monophosphate (NMP) kinase that catalyzes the reversible transfer of the terminal phosphate group between nucleoside triphosphates and monophosphates. Active on AMP and dAMP with ATP as a donor. When GTP is used as phosphate donor, the enzyme phosphorylates AMP, CMP, and to a small extent dCMP. Also displays broad nucleoside diphosphate kinase activity. The polypeptide is Adenylate kinase isoenzyme 5 (AK5) (Homo sapiens (Human)).